A 235-amino-acid polypeptide reads, in one-letter code: Enolase-phosphatase E1 (235 aa).

Residues Asp-10 and Glu-12 each coordinate Mg(2+). Substrate is bound by residues 130-131 (SS) and Lys-169. Asp-194 contributes to the Mg(2+) binding site.

Belongs to the HAD-like hydrolase superfamily. MasA/MtnC family. As to quaternary structure, monomer. It depends on Mg(2+) as a cofactor.

Its subcellular location is the cytoplasm. The protein resides in the nucleus. The catalysed reaction is 5-methylsulfanyl-2,3-dioxopentyl phosphate + H2O = 1,2-dihydroxy-5-(methylsulfanyl)pent-1-en-3-one + phosphate. It participates in amino-acid biosynthesis; L-methionine biosynthesis via salvage pathway; L-methionine from S-methyl-5-thio-alpha-D-ribose 1-phosphate: step 3/6. It functions in the pathway amino-acid biosynthesis; L-methionine biosynthesis via salvage pathway; L-methionine from S-methyl-5-thio-alpha-D-ribose 1-phosphate: step 4/6. Its function is as follows. Bifunctional enzyme that catalyzes the enolization of 2,3-diketo-5-methylthiopentyl-1-phosphate (DK-MTP-1-P) into the intermediate 2-hydroxy-3-keto-5-methylthiopentenyl-1-phosphate (HK-MTPenyl-1-P), which is then dephosphorylated to form the acireductone 1,2-dihydroxy-3-keto-5-methylthiopentene (DHK-MTPene). This is Enolase-phosphatase E1 from Komagataella phaffii (strain GS115 / ATCC 20864) (Yeast).